The following is a 704-amino-acid chain: Ribosomal RNA large subunit methyltransferase K/L (704 aa).

This sequence belongs to the methyltransferase superfamily. RlmKL family.

It localises to the cytoplasm. The catalysed reaction is guanosine(2445) in 23S rRNA + S-adenosyl-L-methionine = N(2)-methylguanosine(2445) in 23S rRNA + S-adenosyl-L-homocysteine + H(+). It catalyses the reaction guanosine(2069) in 23S rRNA + S-adenosyl-L-methionine = N(2)-methylguanosine(2069) in 23S rRNA + S-adenosyl-L-homocysteine + H(+). In terms of biological role, specifically methylates the guanine in position 2445 (m2G2445) and the guanine in position 2069 (m7G2069) of 23S rRNA. The sequence is that of Ribosomal RNA large subunit methyltransferase K/L from Alcanivorax borkumensis (strain ATCC 700651 / DSM 11573 / NCIMB 13689 / SK2).